We begin with the raw amino-acid sequence, 363 residues long: UDP-N-acetylglucosamine--N-acetylmuramyl-(pentapeptide) pyrophosphoryl-undecaprenol N-acetylglucosamine transferase (363 aa).

Residues 10–12 (TGG), asparagine 124, serine 195, isoleucine 250, and glutamine 295 contribute to the UDP-N-acetyl-alpha-D-glucosamine site.

This sequence belongs to the glycosyltransferase 28 family. MurG subfamily.

It is found in the cell membrane. It carries out the reaction Mur2Ac(oyl-L-Ala-gamma-D-Glu-L-Lys-D-Ala-D-Ala)-di-trans,octa-cis-undecaprenyl diphosphate + UDP-N-acetyl-alpha-D-glucosamine = beta-D-GlcNAc-(1-&gt;4)-Mur2Ac(oyl-L-Ala-gamma-D-Glu-L-Lys-D-Ala-D-Ala)-di-trans,octa-cis-undecaprenyl diphosphate + UDP + H(+). Its pathway is cell wall biogenesis; peptidoglycan biosynthesis. Its function is as follows. Cell wall formation. Catalyzes the transfer of a GlcNAc subunit on undecaprenyl-pyrophosphoryl-MurNAc-pentapeptide (lipid intermediate I) to form undecaprenyl-pyrophosphoryl-MurNAc-(pentapeptide)GlcNAc (lipid intermediate II). This is UDP-N-acetylglucosamine--N-acetylmuramyl-(pentapeptide) pyrophosphoryl-undecaprenol N-acetylglucosamine transferase from Lactiplantibacillus plantarum (strain ATCC BAA-793 / NCIMB 8826 / WCFS1) (Lactobacillus plantarum).